Here is a 186-residue protein sequence, read N- to C-terminus: Translation initiation factor IF-3 (186 aa).

It belongs to the IF-3 family. In terms of assembly, monomer.

Its subcellular location is the cytoplasm. IF-3 binds to the 30S ribosomal subunit and shifts the equilibrium between 70S ribosomes and their 50S and 30S subunits in favor of the free subunits, thus enhancing the availability of 30S subunits on which protein synthesis initiation begins. The sequence is that of Translation initiation factor IF-3 from Borreliella afzelii (strain PKo) (Borrelia afzelii).